The primary structure comprises 730 residues: Guanyl-specific ribonuclease pgl-1 (730 aa).

An involved in dimerization region spans residues 205–447 (KQLMLDGPKS…VTRIVESLEK (243 aa)). His-437 acts as the Proton acceptor in catalysis. 2 stretches are compositionally biased toward polar residues: residues 452-472 (DTPS…QDSA) and 568-595 (DANQ…SPTK). Disordered stretches follow at residues 452–475 (DTPS…AYTK), 567–639 (SDAN…TPMP), and 686–730 (GGRG…RGGF). The segment at 674–730 (GGGRGGYGGGDRGGRGGYGGDRGGRGGYGGGDRGGRGGYGGDRGRGGYGGRGGRGGF) is RNA-binding RGG-box.

As to quaternary structure, homodimer. Interacts with pgl-2 and pgl-3; this association is not required for P-granule localization of either pgl-2 or pgl-3. Interacts with ife-1. Interacts with prmt-1; the interaction is direct. Interacts with nmad-1. Interacts with P granule components meg-1, meg-3 and meg-4. It depends on Does not require metal ions for catalytic activity. as a cofactor. Methylated at arginine residues in the RNA-binding RGG-box by prmt-1. Methylation promotes P-granule degradation by autophagy. As to expression, expressed in the germline. Expressed in most somatic cells.

Its subcellular location is the cytoplasmic granule. The enzyme catalyses [RNA] containing guanosine + H2O = an [RNA fragment]-3'-guanosine-3'-phosphate + a 5'-hydroxy-ribonucleotide-3'-[RNA fragment].. Its activity is regulated as follows. Not inhibited by RNase inhibitor RNasin. Guanyl-specific endoribonuclease which cleaves the phosphodiester bond in single-stranded RNA between the 3'-guanylic residue and the 5'-OH residue of adjacent nucleotide, resulting in the formation of a corresponding 2',3'-cyclic phosphate intermediate. Together with the P-granule component pgl-3, is involved in the formation of P-granules. Together with pgl-3, probably recruits other granule components such as pos-1, mex-3 and glh-1 to P-granules. In addition, may act redundantly with pgl-3 to protect germ cells from excessive germline apoptosis during normal oogenesis and development of the two gonadal arms. This may in part be through regulating the localization of sir-2.1 which is involved in germ cell apoptosis. May protect somatic cells from excessive apoptosis during normal development. Essential role in male and female postembryonic germline development; maternally provided protein maintains a population of proliferating germ cells and zygotic expression is required for correct oogenesis. The polypeptide is Guanyl-specific ribonuclease pgl-1 (Caenorhabditis elegans).